We begin with the raw amino-acid sequence, 337 residues long: Transcription factor HBI1 (337 aa).

Residues 119–180 are disordered; sequence VALKNKRKPE…SKGASENQKL (62 aa). A compositionally biased stretch (basic and acidic residues) spans 126–151; it reads KPEVKTREEQKTEKKIKVEAETESSM. The segment covering 152-165 has biased composition (polar residues); that stretch reads KGKSNMGNTEASSD. The 51-residue stretch at 191 to 241 folds into the bHLH domain; that stretch reads QATDRHSLAERARREKISKKMKYLQDIVPGCNKVTGKAGMLDEIINYVQCL.

As to quaternary structure, homodimer. Interacts with IBH1. As to expression, highly expressed in hypocotyls and cotyledons. Expressed in leaves, stems, and flowers.

The protein localises to the nucleus. In terms of biological role, atypical bHLH transcription factor that acts as a positive regulator of cell elongation downstream of multiple external and endogenous signals by direct binding to the promoters and activation of the two expansin genes EXPA1 and EXPA8, encoding cell wall loosening enzymes. Transcriptional activity is inhibited when binding to the bHLH transcription factor IBH1. The chain is Transcription factor HBI1 (HBI1) from Arabidopsis thaliana (Mouse-ear cress).